The chain runs to 114 residues: Small ribosomal subunit protein bS6 (114 aa).

Belongs to the bacterial ribosomal protein bS6 family.

In terms of biological role, binds together with bS18 to 16S ribosomal RNA. In Thermosynechococcus vestitus (strain NIES-2133 / IAM M-273 / BP-1), this protein is Small ribosomal subunit protein bS6.